A 704-amino-acid polypeptide reads, in one-letter code: Elongation factor G (704 aa).

One can recognise a tr-type G domain in the interval 8–290; the sequence is ARYRNIGISA…AVIDYLPSPV (283 aa). Residues 17–24, 88–92, and 142–145 contribute to the GTP site; these read AHIDAGKT, DTPGH, and NKMD. N6-acetyllysine occurs at positions 504 and 643.

It belongs to the TRAFAC class translation factor GTPase superfamily. Classic translation factor GTPase family. EF-G/EF-2 subfamily.

It is found in the cytoplasm. Functionally, catalyzes the GTP-dependent ribosomal translocation step during translation elongation. During this step, the ribosome changes from the pre-translocational (PRE) to the post-translocational (POST) state as the newly formed A-site-bound peptidyl-tRNA and P-site-bound deacylated tRNA move to the P and E sites, respectively. Catalyzes the coordinated movement of the two tRNA molecules, the mRNA and conformational changes in the ribosome. The protein is Elongation factor G of Shigella sonnei (strain Ss046).